A 207-amino-acid polypeptide reads, in one-letter code: NADH-quinone oxidoreductase subunit C (207 aa).

It belongs to the complex I 30 kDa subunit family. As to quaternary structure, NDH-1 is composed of 14 different subunits. Subunits NuoB, C, D, E, F, and G constitute the peripheral sector of the complex.

It localises to the cell inner membrane. The catalysed reaction is a quinone + NADH + 5 H(+)(in) = a quinol + NAD(+) + 4 H(+)(out). Its function is as follows. NDH-1 shuttles electrons from NADH, via FMN and iron-sulfur (Fe-S) centers, to quinones in the respiratory chain. The immediate electron acceptor for the enzyme in this species is believed to be ubiquinone. Couples the redox reaction to proton translocation (for every two electrons transferred, four hydrogen ions are translocated across the cytoplasmic membrane), and thus conserves the redox energy in a proton gradient. The chain is NADH-quinone oxidoreductase subunit C from Rickettsia felis (strain ATCC VR-1525 / URRWXCal2) (Rickettsia azadi).